Reading from the N-terminus, the 521-residue chain is GMP synthase [glutamine-hydrolyzing] (521 aa).

A Glutamine amidotransferase type-1 domain is found at 8–203 (KILILDFGAQ…VVDVCGCQTL (196 aa)). Catalysis depends on Cys-85, which acts as the Nucleophile. Catalysis depends on residues His-177 and Glu-179. The region spanning 204–396 (WTAANIIDDQ…LGLPRTMVYR (193 aa)) is the GMPS ATP-PPase domain. 231-237 (SGGVDSS) is a binding site for ATP.

Homodimer.

It catalyses the reaction XMP + L-glutamine + ATP + H2O = GMP + L-glutamate + AMP + diphosphate + 2 H(+). It participates in purine metabolism; GMP biosynthesis; GMP from XMP (L-Gln route): step 1/1. Functionally, catalyzes the synthesis of GMP from XMP. The chain is GMP synthase [glutamine-hydrolyzing] from Stenotrophomonas maltophilia (strain K279a).